A 369-amino-acid chain; its full sequence is Cell division protein FtsZ (369 aa).

Residues 27 to 31, 119 to 121, E150, and N189 each bind GTP; these read GAGNN and GTG.

It belongs to the FtsZ family. As to quaternary structure, homodimer. Polymerizes to form a dynamic ring structure in a strictly GTP-dependent manner. Interacts directly with several other division proteins.

It is found in the cytoplasm. Essential cell division protein that forms a contractile ring structure (Z ring) at the future cell division site. The regulation of the ring assembly controls the timing and the location of cell division. One of the functions of the FtsZ ring is to recruit other cell division proteins to the septum to produce a new cell wall between the dividing cells. Binds GTP and shows GTPase activity. This Mycoplasma genitalium (strain ATCC 33530 / DSM 19775 / NCTC 10195 / G37) (Mycoplasmoides genitalium) protein is Cell division protein FtsZ.